The following is a 180-amino-acid chain: NADH-quinone oxidoreductase subunit I (180 aa).

2 4Fe-4S ferredoxin-type domains span residues 46 to 80 (GRIVLTCDPDGYERCVACNLCAVACPVDCISLQKT) and 90 to 119 (EFFRINFSRCIFCGLCEEACPTTAIQLTPD). Residues C60, C63, C66, C70, C99, C102, C105, and C109 each coordinate [4Fe-4S] cluster.

This sequence belongs to the complex I 23 kDa subunit family. NDH-1 is composed of 14 different subunits. Subunits NuoA, H, J, K, L, M, N constitute the membrane sector of the complex. Requires [4Fe-4S] cluster as cofactor.

Its subcellular location is the cell membrane. It carries out the reaction a quinone + NADH + 5 H(+)(in) = a quinol + NAD(+) + 4 H(+)(out). NDH-1 shuttles electrons from NADH, via FMN and iron-sulfur (Fe-S) centers, to quinones in the respiratory chain. The immediate electron acceptor for the enzyme in this species is believed to be ubiquinone. Couples the redox reaction to proton translocation (for every two electrons transferred, four hydrogen ions are translocated across the cytoplasmic membrane), and thus conserves the redox energy in a proton gradient. The chain is NADH-quinone oxidoreductase subunit I from Baumannia cicadellinicola subsp. Homalodisca coagulata.